A 290-amino-acid chain; its full sequence is Fructose-1,6-bisphosphatase class 1 (290 aa).

4 residues coordinate Mg(2+): Glu-78, Asp-96, Leu-98, and Asp-99. Substrate-binding positions include 99-102 (DGSS), Tyr-201, and Lys-226. Glu-232 is a binding site for Mg(2+).

Belongs to the FBPase class 1 family. Homotetramer. Mg(2+) is required as a cofactor.

Its subcellular location is the cytoplasm. It catalyses the reaction beta-D-fructose 1,6-bisphosphate + H2O = beta-D-fructose 6-phosphate + phosphate. It functions in the pathway carbohydrate biosynthesis; gluconeogenesis. This Helicobacter pylori (strain ATCC 700392 / 26695) (Campylobacter pylori) protein is Fructose-1,6-bisphosphatase class 1.